A 417-amino-acid chain; its full sequence is Inactive GDSL esterase/lipase-like protein 25 (417 aa).

Residues 1 to 50 (MLLIPSFTANSNEPPPSKLSLSDLSMAILKSHFFLLFPLLLLHFHTVSFA) form the signal peptide. N-linked (GlcNAc...) asparagine glycans are attached at residues Asn-160, Asn-308, and Asn-311. His-331 is a catalytic residue.

The protein belongs to the 'GDSL' lipolytic enzyme family. As to quaternary structure, interacts with the PYK10 complex and TGG2, but not with TGG1 or PEN2. As to expression, expressed throughout the seedling, rosette leaves, roots, inflorescence and imbibed seed, but not in pollen.

The protein localises to the vacuole. It is found in the endoplasmic reticulum. Functionally, involved in organization of the endomembrane system and is required for endoplasmic reticulum morphology and organelle distribution. May act by inhibiting the formation of PYK10 complex by binding to GLL23 and exporting it from the ER. Required for proper subcellular localization of myrosinase TGG2. Has no lipase or esterase activity. The chain is Inactive GDSL esterase/lipase-like protein 25 (MVP1) from Arabidopsis thaliana (Mouse-ear cress).